A 159-amino-acid polypeptide reads, in one-letter code: Putative 4-hydroxy-4-methyl-2-oxoglutarate aldolase (159 aa).

Substrate-binding positions include 74–77 (GDNL) and R96. An a divalent metal cation-binding site is contributed by D97.

This sequence belongs to the class II aldolase/RraA-like family. Homotrimer. A divalent metal cation serves as cofactor.

The enzyme catalyses 4-hydroxy-4-methyl-2-oxoglutarate = 2 pyruvate. It catalyses the reaction oxaloacetate + H(+) = pyruvate + CO2. Catalyzes the aldol cleavage of 4-hydroxy-4-methyl-2-oxoglutarate (HMG) into 2 molecules of pyruvate. Also contains a secondary oxaloacetate (OAA) decarboxylase activity due to the common pyruvate enolate transition state formed following C-C bond cleavage in the retro-aldol and decarboxylation reactions. The polypeptide is Putative 4-hydroxy-4-methyl-2-oxoglutarate aldolase (Bacillus cereus (strain ZK / E33L)).